The sequence spans 491 residues: GTPase Der (491 aa).

EngA-type G domains follow at residues 54–217 (PVLA…PEYS) and 229–402 (RRIA…ESWD). Residues 60-67 (GRPNVGKS), 107-111 (DTGGW), 169-172 (NKVD), 235-242 (GRPNVGKS), 282-286 (DTAGI), and 347-350 (NKWD) each bind GTP. In terms of domain architecture, KH-like spans 403-485 (RRIPTGRLNA…PIEVNMRVRE (83 aa)).

Belongs to the TRAFAC class TrmE-Era-EngA-EngB-Septin-like GTPase superfamily. EngA (Der) GTPase family. In terms of assembly, associates with the 50S ribosomal subunit.

In terms of biological role, GTPase that plays an essential role in the late steps of ribosome biogenesis. The polypeptide is GTPase Der (Paenarthrobacter aurescens (strain TC1)).